The following is a 349-amino-acid chain: DNA replication and repair protein RecF (349 aa).

Glycine 30 to threonine 37 contributes to the ATP binding site.

The protein belongs to the RecF family.

It localises to the cytoplasm. The RecF protein is involved in DNA metabolism; it is required for DNA replication and normal SOS inducibility. RecF binds preferentially to single-stranded, linear DNA. It also seems to bind ATP. This chain is DNA replication and repair protein RecF, found in Francisella tularensis subsp. tularensis (strain FSC 198).